The primary structure comprises 439 residues: Na(+)/H(+) antiporter NhaA 1 (439 aa).

Transmembrane regions (helical) follow at residues 14–34 (ITGGILLIIAATTALFWANLA), 60–80 (ISLHQIVNEFLMAIFFFFIGL), 98–118 (ALPLFSALGGVVLPASIYYFF), 127–147 (GWGIPMATDIAFALGVLAMVG), 156–176 (IFLSALAIGDDLMAVLVIAIF), 179–199 (EQIFVNELLVGFLGLIVLAVA), 213–233 (IGLIIVWISFLASGVHATIAG), 303–323 (HPISALFIVPLFALGNAGVIV), 335–355 (IVLGIAAGLIIGKPLGIFLFA), 375–395 (IIGTGFLAGMGFTMSLFISDL), and 408–428 (VAVLLASIISGIVGYLILISA).

Belongs to the NhaA Na(+)/H(+) (TC 2.A.33) antiporter family.

It is found in the cell inner membrane. It carries out the reaction Na(+)(in) + 2 H(+)(out) = Na(+)(out) + 2 H(+)(in). Functionally, na(+)/H(+) antiporter that extrudes sodium in exchange for external protons. This is Na(+)/H(+) antiporter NhaA 1 from Psychromonas ingrahamii (strain DSM 17664 / CCUG 51855 / 37).